Consider the following 154-residue polypeptide: Large ribosomal subunit protein uL22c (154 aa).

This sequence belongs to the universal ribosomal protein uL22 family. In terms of assembly, part of the 50S ribosomal subunit.

It is found in the plastid. Its subcellular location is the chloroplast. In terms of biological role, this protein binds specifically to 23S rRNA. Functionally, the globular domain of the protein is located near the polypeptide exit tunnel on the outside of the subunit, while an extended beta-hairpin is found that lines the wall of the exit tunnel in the center of the 70S ribosome. This is Large ribosomal subunit protein uL22c (rpl22) from Platanus occidentalis (Sycamore).